Reading from the N-terminus, the 231-residue chain is 7-cyano-7-deazaguanine synthase (231 aa).

An ATP-binding site is contributed by 8–18 (FSGGQDSTTCL). Residues cysteine 188, cysteine 197, cysteine 200, and cysteine 203 each coordinate Zn(2+).

Belongs to the QueC family. It depends on Zn(2+) as a cofactor.

The catalysed reaction is 7-carboxy-7-deazaguanine + NH4(+) + ATP = 7-cyano-7-deazaguanine + ADP + phosphate + H2O + H(+). It participates in purine metabolism; 7-cyano-7-deazaguanine biosynthesis. Functionally, catalyzes the ATP-dependent conversion of 7-carboxy-7-deazaguanine (CDG) to 7-cyano-7-deazaguanine (preQ(0)). The polypeptide is 7-cyano-7-deazaguanine synthase (Escherichia coli O127:H6 (strain E2348/69 / EPEC)).